A 45-amino-acid polypeptide reads, in one-letter code: Photosystem II reaction center protein K (45 aa).

Positions 1–8 are excised as a propeptide; that stretch reads MELAMLLA. A helical transmembrane segment spans residues 24 to 44; the sequence is LPVIPVFFLLLAFVWQAAVGF.

Belongs to the PsbK family. PSII is composed of 1 copy each of membrane proteins PsbA, PsbB, PsbC, PsbD, PsbE, PsbF, PsbH, PsbI, PsbJ, PsbK, PsbL, PsbM, PsbT, PsbX, PsbY, PsbZ, Psb30/Ycf12, peripheral proteins PsbO, CyanoQ (PsbQ), PsbU, PsbV and a large number of cofactors. It forms dimeric complexes.

It localises to the cellular thylakoid membrane. Functionally, one of the components of the core complex of photosystem II (PSII). PSII is a light-driven water:plastoquinone oxidoreductase that uses light energy to abstract electrons from H(2)O, generating O(2) and a proton gradient subsequently used for ATP formation. It consists of a core antenna complex that captures photons, and an electron transfer chain that converts photonic excitation into a charge separation. This Trichodesmium erythraeum (strain IMS101) protein is Photosystem II reaction center protein K.